We begin with the raw amino-acid sequence, 595 residues long: Probable Xaa-Pro aminopeptidase CHGG_02942 (595 aa).

Residues 51–76 (KSGPSSSNLSPSTLSTEKTSSDSSGV) form a disordered region. The span at 52–66 (SGPSSSNLSPSTLST) shows a compositional bias: low complexity. Mn(2+) is bound by residues aspartate 334, aspartate 345, glutamate 541, and glutamate 563.

This sequence belongs to the peptidase M24B family. The cofactor is Mn(2+).

It catalyses the reaction Release of any N-terminal amino acid, including proline, that is linked to proline, even from a dipeptide or tripeptide.. Catalyzes the removal of a penultimate prolyl residue from the N-termini of peptides. This chain is Probable Xaa-Pro aminopeptidase CHGG_02942, found in Chaetomium globosum (strain ATCC 6205 / CBS 148.51 / DSM 1962 / NBRC 6347 / NRRL 1970) (Soil fungus).